We begin with the raw amino-acid sequence, 283 residues long: Thymidylate synthase (283 aa).

A dUMP-binding site is contributed by R22. Catalysis depends on C160, which acts as the Nucleophile. DUMP contacts are provided by residues 180–183 (RSCD), N191, and 221–223 (HIY). D183 is a (6R)-5,10-methylene-5,6,7,8-tetrahydrofolate binding site. Residue S282 coordinates (6R)-5,10-methylene-5,6,7,8-tetrahydrofolate.

It belongs to the thymidylate synthase family. Bacterial-type ThyA subfamily. Homodimer.

Its subcellular location is the cytoplasm. It carries out the reaction dUMP + (6R)-5,10-methylene-5,6,7,8-tetrahydrofolate = 7,8-dihydrofolate + dTMP. The protein operates within pyrimidine metabolism; dTTP biosynthesis. Its function is as follows. Catalyzes the reductive methylation of 2'-deoxyuridine-5'-monophosphate (dUMP) to 2'-deoxythymidine-5'-monophosphate (dTMP) while utilizing 5,10-methylenetetrahydrofolate (mTHF) as the methyl donor and reductant in the reaction, yielding dihydrofolate (DHF) as a by-product. This enzymatic reaction provides an intracellular de novo source of dTMP, an essential precursor for DNA biosynthesis. The sequence is that of Thymidylate synthase from Tolumonas auensis (strain DSM 9187 / NBRC 110442 / TA 4).